The chain runs to 494 residues: Acetylcholine receptor subunit epsilon (494 aa).

The N-terminal stretch at 1–20 (MTMALLGTLLLLALFGRSQG) is a signal peptide. At 21 to 239 (KNEELSLYHH…VIYTLIIRRK (219 aa)) the chain is on the extracellular side. N-linked (GlcNAc...) asparagine glycosylation is found at asparagine 86 and asparagine 161. A disulfide bond links cysteine 148 and cysteine 162. Residues 240 to 264 (PLFYVINIIVPCVLISGLVLLAYFL) form a helical membrane-spanning segment. At 265 to 272 (PAQAGGQK) the chain is on the cytoplasmic side. A helical transmembrane segment spans residues 273–291 (CTVSINVLLAQTVFLFLIA). The Extracellular segment spans residues 292 to 306 (QKIPETSLSVPLLGR). The chain crosses the membrane as a helical span at residues 307 to 328 (YLIFVMVVATLIVMNCVIVLNV). At 329-457 (SLRTPTTHAT…WVRMGKALDN (129 aa)) the chain is on the cytoplasmic side. The chain crosses the membrane as a helical span at residues 458-481 (VCFWAALVLFSVGSTLIFLGGYFN). The Extracellular segment spans residues 482 to 494 (QVPDLPYPPCIQP).

Belongs to the ligand-gated ion channel (TC 1.A.9) family. Acetylcholine receptor (TC 1.A.9.1) subfamily. Epsilon/CHRNE sub-subfamily. As to quaternary structure, pentamer of two alpha chains, and one each of the beta, delta, and gamma (in immature muscle) or epsilon (in mature muscle) chains. The muscle heteropentamer composed of alpha-1, beta-1, delta, epsilon subunits interacts with the alpha-conotoxin ImII.

The protein localises to the postsynaptic cell membrane. It is found in the cell membrane. It catalyses the reaction K(+)(in) = K(+)(out). The catalysed reaction is Na(+)(in) = Na(+)(out). In terms of biological role, after binding acetylcholine, the AChR responds by an extensive change in conformation that affects all subunits and leads to opening of an ion-conducting channel across the plasma membrane. This chain is Acetylcholine receptor subunit epsilon (Chrne), found in Rattus norvegicus (Rat).